Here is a 317-residue protein sequence, read N- to C-terminus: AT-hook motif nuclear-localized protein 22 (317 aa).

2 disordered regions span residues 22–41 (HHQF…HDID) and 48–106 (LKRD…KPPI). A compositionally biased stretch (low complexity) spans 26-35 (QHQQQQQQQN). Positions 48–64 (LKRDRDADIDPNEHSSA) are enriched in basic and acidic residues. The span at 72–84 (GSGGESGGGGGGD) shows a compositional bias: gly residues. Positions 89-101 (RRPRGRPAGSKNK) form a DNA-binding region, a.T hook. In terms of domain architecture, PPC spans 113 to 253 (ANALKSHVME…EDDQEEQTAG (141 aa)). Residues 258-285 (NIDGNATMGGGTQTQTQTQQQQQQQLMQ) are disordered. A compositionally biased stretch (low complexity) spans 270-282 (QTQTQTQQQQQQQ).

In terms of assembly, homodimer. Interacts with HDA1/HDA19, HDA6 and HDA9. As to expression, expressed at the hypocotyl-root transition zone and the root hair zone. Also detected in the inflorescence.

It localises to the nucleus. Functionally, transcription factor that specifically binds AT-rich DNA sequences related to the nuclear matrix attachment regions (MARs). Binds an AT-rich DNA sequences in the FLOWERING LOCUS T (FT) promoter. Acts redundantly with AHL18, AHL27 and AHL29 in the regulation of flowering and regulation of the hypocotyl elongation. Plays a role in both photo- and skotomorphogenesis. Acts as a chromatin remodeling factor that modifies the architecture of FLOWERING LOCUS T (FT) chromatin by modulating both H3 acetylation and methylation leading to the regulation of FT expression during flowering induction. The polypeptide is AT-hook motif nuclear-localized protein 22 (Arabidopsis thaliana (Mouse-ear cress)).